Here is an 86-residue protein sequence, read N- to C-terminus: Conidiation-specific protein 10 (86 aa).

The segment covering 1-11 (MAGTGNDNPGN) has biased composition (polar residues). A disordered region spans residues 1–86 (MAGTGNDNPG…SGGTGADDDE (86 aa)). Low complexity predominate over residues 49–58 (SKGGKASSGS). Residues 62–71 (GSEKAREAGR) are compositionally biased toward basic and acidic residues. Gly residues predominate over residues 75-86 (KASGGTGADDDE).

Belongs to the con-10 family.

This is Conidiation-specific protein 10 (con-10) from Neurospora crassa (strain ATCC 24698 / 74-OR23-1A / CBS 708.71 / DSM 1257 / FGSC 987).